A 90-amino-acid polypeptide reads, in one-letter code: uncharacterized protein (90 aa).

It localises to the mitochondrion. This is an uncharacterized protein from Ascobolus immersus.